A 291-amino-acid polypeptide reads, in one-letter code: 33 kDa chaperonin (291 aa).

Cystine bridges form between cysteine 237–cysteine 239 and cysteine 270–cysteine 273.

The protein belongs to the HSP33 family. In terms of processing, under oxidizing conditions two disulfide bonds are formed involving the reactive cysteines. Under reducing conditions zinc is bound to the reactive cysteines and the protein is inactive.

It is found in the cytoplasm. Its function is as follows. Redox regulated molecular chaperone. Protects both thermally unfolding and oxidatively damaged proteins from irreversible aggregation. Plays an important role in the bacterial defense system toward oxidative stress. This chain is 33 kDa chaperonin, found in Bacillus mycoides (strain KBAB4) (Bacillus weihenstephanensis).